Reading from the N-terminus, the 319-residue chain is Probable cell division protein WhiA (319 aa).

The H-T-H motif DNA-binding region spans Ser277–Lys310.

This sequence belongs to the WhiA family.

Its function is as follows. Involved in cell division and chromosome segregation. In Tropheryma whipplei (strain Twist) (Whipple's bacillus), this protein is Probable cell division protein WhiA.